The primary structure comprises 213 residues: Octanoyltransferase (213 aa).

Positions 32–207 (NSTLDEIWLV…NILALLNNPD (176 aa)) constitute a BPL/LPL catalytic domain. Substrate-binding positions include 71–78 (RGGQVTYH), 138–140 (SLG), and 151–153 (GLA). The active-site Acyl-thioester intermediate is Cys-169.

It belongs to the LipB family.

The protein localises to the cytoplasm. The catalysed reaction is octanoyl-[ACP] + L-lysyl-[protein] = N(6)-octanoyl-L-lysyl-[protein] + holo-[ACP] + H(+). It participates in protein modification; protein lipoylation via endogenous pathway; protein N(6)-(lipoyl)lysine from octanoyl-[acyl-carrier-protein]: step 1/2. Functionally, catalyzes the transfer of endogenously produced octanoic acid from octanoyl-acyl-carrier-protein onto the lipoyl domains of lipoate-dependent enzymes. Lipoyl-ACP can also act as a substrate although octanoyl-ACP is likely to be the physiological substrate. The polypeptide is Octanoyltransferase (Shigella flexneri serotype 5b (strain 8401)).